The primary structure comprises 397 residues: MNIHEYQAKALLKGYGAPVAEGVAILKVEEAEAAAKSLPGPLYVVKSQIHAGGRGKGKFKELSPEAKGGVRLAKSIDEVVAHAKEMLGNTLVTAQTGEAGKQVNRLYIEDGADIARELYCSLLVDRSVGRVAFVVSTEGGMDIEAVAHDTPEKIQTIAIDPEAGVTAADVAAISKAFELEGAAAEDAKTLFPMLYKAFGEKDMALLEINPLIVMKDGHLRVLDAKMSFDGNALFRHDDVKVLRDETEEDAKEIEASKWDLAYVALDGNIGCMVNGAGLAMATMDIIKLYGKEPANFCDVGGGAGKEKVAAAFKIITADPKVEGILVNIFGGIMKCDVIAEGVIAAVKEVGLKVPLVVRLEGTNVELGKKILNESGLAITAADDLDDAAKKIVAAING.

An ATP-grasp domain is found at 9 to 254 (KALLKGYGAP…ETEEDAKEIE (246 aa)). Residues K46, 53-55 (GRG), E109, A112, and E117 each bind ATP. Residues N209 and D223 each coordinate Mg(2+). Substrate contacts are provided by residues N274 and 331 to 333 (GIM).

Belongs to the succinate/malate CoA ligase beta subunit family. As to quaternary structure, heterotetramer of two alpha and two beta subunits. Requires Mg(2+) as cofactor.

The enzyme catalyses succinate + ATP + CoA = succinyl-CoA + ADP + phosphate. The catalysed reaction is GTP + succinate + CoA = succinyl-CoA + GDP + phosphate. It functions in the pathway carbohydrate metabolism; tricarboxylic acid cycle; succinate from succinyl-CoA (ligase route): step 1/1. Its function is as follows. Succinyl-CoA synthetase functions in the citric acid cycle (TCA), coupling the hydrolysis of succinyl-CoA to the synthesis of either ATP or GTP and thus represents the only step of substrate-level phosphorylation in the TCA. The beta subunit provides nucleotide specificity of the enzyme and binds the substrate succinate, while the binding sites for coenzyme A and phosphate are found in the alpha subunit. This is Succinate--CoA ligase [ADP-forming] subunit beta from Rhizobium johnstonii (strain DSM 114642 / LMG 32736 / 3841) (Rhizobium leguminosarum bv. viciae).